The sequence spans 416 residues: Glutamyl-tRNA reductase (416 aa).

Substrate contacts are provided by residues 50-53 (TCNR), Ser-109, 114-116 (EPQ), and Gln-120. Cys-51 (nucleophile) is an active-site residue. 189–194 (GAGEMI) lines the NADP(+) pocket.

It belongs to the glutamyl-tRNA reductase family. As to quaternary structure, homodimer.

It carries out the reaction (S)-4-amino-5-oxopentanoate + tRNA(Glu) + NADP(+) = L-glutamyl-tRNA(Glu) + NADPH + H(+). The protein operates within porphyrin-containing compound metabolism; protoporphyrin-IX biosynthesis; 5-aminolevulinate from L-glutamyl-tRNA(Glu): step 1/2. Functionally, catalyzes the NADPH-dependent reduction of glutamyl-tRNA(Glu) to glutamate 1-semialdehyde (GSA). This chain is Glutamyl-tRNA reductase, found in Ruthia magnifica subsp. Calyptogena magnifica.